Reading from the N-terminus, the 482-residue chain is Nucleoside triphosphate pyrophosphatase/Nudix hydrolase fusion protein (482 aa).

The segment at 1-299 (MSIPLILASK…DLWNVGRGEL (299 aa)) is maf-like. Residue Asp-167 is the Proton acceptor of the active site. Residues 338–475 (GTNGASGILL…TDWPRFAARL (138 aa)) form the Nudix hydrolase domain.

This sequence in the N-terminal section; belongs to the Maf family. A divalent metal cation is required as a cofactor.

The protein localises to the cytoplasm. It catalyses the reaction a ribonucleoside 5'-triphosphate + H2O = a ribonucleoside 5'-phosphate + diphosphate + H(+). It carries out the reaction a 2'-deoxyribonucleoside 5'-triphosphate + H2O = a 2'-deoxyribonucleoside 5'-phosphate + diphosphate + H(+). Nucleoside triphosphate pyrophosphatase. May have a dual role in cell division arrest and in preventing the incorporation of modified nucleotides into cellular nucleic acids. The sequence is that of Nucleoside triphosphate pyrophosphatase/Nudix hydrolase fusion protein from Bifidobacterium longum (strain NCC 2705).